The primary structure comprises 429 residues: Protein AST1 (429 aa).

Interacts with PMA1.

The protein localises to the cell membrane. The protein resides in the membrane raft. Its subcellular location is the golgi apparatus membrane. It localises to the late endosome membrane. Its function is as follows. Lipid raft-associated protein involved in the targeting of PMA1 from Golgi to the plasma membrane. May induce clustering of PMA1, which facilitates partition of PMA1 into lipid rafts after leaving the ER and its transport to the cell surface. The sequence is that of Protein AST1 from Saccharomyces cerevisiae (strain ATCC 204508 / S288c) (Baker's yeast).